The sequence spans 748 residues: Polyribonucleotide nucleotidyltransferase (748 aa).

2 residues coordinate Mg(2+): Asp-487 and Asp-493. The 60-residue stretch at 554–613 (PSTTTIKIDKDKIRDIIGPGGKVIKEICETSGAKIDISDDGTVSVYASDRDKLKVALDKI) folds into the KH domain. An S1 motif domain is found at 623–691 (GEIFNGTVVK…NKGKAKLTIK (69 aa)). The tract at residues 695–733 (KDKFSNNTKPKTSVNNTKDNSEPEQRHDSSKKRAWNEDN) is disordered. The segment covering 699–712 (SNNTKPKTSVNNTK) has biased composition (polar residues). The span at 713-722 (DNSEPEQRHD) shows a compositional bias: basic and acidic residues.

This sequence belongs to the polyribonucleotide nucleotidyltransferase family. It depends on Mg(2+) as a cofactor.

The protein resides in the cytoplasm. It catalyses the reaction RNA(n+1) + phosphate = RNA(n) + a ribonucleoside 5'-diphosphate. Functionally, involved in mRNA degradation. Catalyzes the phosphorolysis of single-stranded polyribonucleotides processively in the 3'- to 5'-direction. The chain is Polyribonucleotide nucleotidyltransferase from Rickettsia rickettsii (strain Iowa).